The sequence spans 87 residues: MAGSENKARTMQGVVVSNGMDKSVVVMTNRYIKHPKYKKFVRKSTKVMAHDADNACGVGDRVTISECTPFSKRKTWSLVSIDEKAAL.

It belongs to the universal ribosomal protein uS17 family. Part of the 30S ribosomal subunit.

In terms of biological role, one of the primary rRNA binding proteins, it binds specifically to the 5'-end of 16S ribosomal RNA. This Hydrogenovibrio crunogenus (strain DSM 25203 / XCL-2) (Thiomicrospira crunogena) protein is Small ribosomal subunit protein uS17.